We begin with the raw amino-acid sequence, 105 residues long: Wound-induced protein 1 (105 aa).

To potato anionic peroxidase. As to expression, ubiquitous.

The protein is Wound-induced protein 1 (WUN1) of Solanum tuberosum (Potato).